A 369-amino-acid chain; its full sequence is RING-H2 finger protein ATL47 (369 aa).

The chain crosses the membrane as a helical span at residues 52-72 (IILFIIVLLSVIFFICSILHL). Residues 144-186 (CAVCLCEFSEDDKLRLLPNCSHAFHIDCIDTWLLSNSTCPLCR) form an RING-type; atypical zinc finger. The segment at 332-355 (NNHPSETNLVVGGSSSSSSYVCSG) is disordered. A compositionally biased stretch (low complexity) spans 341 to 355 (VVGGSSSSSSYVCSG).

Belongs to the RING-type zinc finger family. ATL subfamily.

Its subcellular location is the membrane. The enzyme catalyses S-ubiquitinyl-[E2 ubiquitin-conjugating enzyme]-L-cysteine + [acceptor protein]-L-lysine = [E2 ubiquitin-conjugating enzyme]-L-cysteine + N(6)-ubiquitinyl-[acceptor protein]-L-lysine.. It participates in protein modification; protein ubiquitination. The chain is RING-H2 finger protein ATL47 (ATL47) from Arabidopsis thaliana (Mouse-ear cress).